The sequence spans 500 residues: Melanopsin-like (500 aa).

Residues 1–65 lie on the Extracellular side of the membrane; the sequence is MSHHSSWRGH…TVDVPDHAHY (65 aa). The N-linked (GlcNAc...) asparagine glycan is linked to asparagine 18. The helical transmembrane segment at 66-86 threads the bilayer; the sequence is IIGSVILIVGITGVIGNALVV. Over 87–101 the chain is Cytoplasmic; the sequence is YVFCRSRTLRTAGNM. Residues 102 to 122 form a helical membrane-spanning segment; it reads FIVNLAVADFLMSVTQSPVFF. At 123–138 the chain is on the extracellular side; it reads AASLHRRWVFGERPCE. A disulfide bridge connects residues cysteine 137 and cysteine 215. A helical membrane pass occupies residues 139–159; it reads LYAFCGALFGICSMMTLTAIA. Topologically, residues 160–182 are cytoplasmic; the sequence is ADRCLAITQPLALVSRVSRRKAG. Residues 183–203 traverse the membrane as a helical segment; the sequence is AVLVVVWLYSLGWSLPPFFGW. Residues 204-232 lie on the Extracellular side of the membrane; sequence SAYVPEGLQTSCSWDYMTFTPSVRAYTIL. Residues 233–253 form a helical membrane-spanning segment; the sequence is LFVFVFFIPLGIIGSCYFAIF. Residues 254–286 lie on the Cytoplasmic side of the membrane; sequence QTIRAAGKEIRELDCGETHKVYERMQNEWKMAK. The helical transmembrane segment at 287 to 307 threads the bilayer; that stretch reads VALVVIVLFIISWSPYSVVAL. Residues 308 to 322 are Extracellular-facing; the sequence is TATAGYSHFLTPYMN. The helical transmembrane segment at 323-343 threads the bilayer; sequence SVPAVIAKASAIHNPIIYAIT. At lysine 330 the chain carries N6-(retinylidene)lysine. Topologically, residues 344-500 are cytoplasmic; sequence HPKYRVAIAR…SDGKALLGGN (157 aa). Positions 404–428 are disordered; sequence RWGKTRLSSASDSDSCWTESEADGS. The segment covering 409–428 has biased composition (polar residues); sequence RLSSASDSDSCWTESEADGS.

Belongs to the G-protein coupled receptor 1 family. Opsin subfamily. As to expression, expressed in a subset of retinal horizontal cells.

The protein localises to the cell membrane. In terms of biological role, photoreceptor implicated in non-image-forming responses to light. The protein is Melanopsin-like (opn4l) of Danio rerio (Zebrafish).